The sequence spans 159 residues: Large ribosomal subunit protein uL11 (159 aa).

It belongs to the universal ribosomal protein uL11 family. As to quaternary structure, part of the ribosomal stalk of the 50S ribosomal subunit. Interacts with L10 and the large rRNA to form the base of the stalk. L10 forms an elongated spine to which L12 dimers bind in a sequential fashion forming a multimeric L10(L12)X complex.

Forms part of the ribosomal stalk which helps the ribosome interact with GTP-bound translation factors. The polypeptide is Large ribosomal subunit protein uL11 (Methanococcus maripaludis (strain C5 / ATCC BAA-1333)).